Consider the following 117-residue polypeptide: MGWSCIMLFLAATATGVHSQVQLQQPGAELVKPGASVKLSCKASGYTFTSYWMHWVKQRPGRGLEWIGRIDPNSGGTKYNEKFKSKATLTVDTSSSTAYMQLHSLTSEDSAVYYCAR.

The first 19 residues, 1–19, serve as a signal peptide directing secretion; that stretch reads MGWSCIMLFLAATATGVHS. The framework-1 stretch occupies residues 20 to 49; that stretch reads QVQLQQPGAELVKPGASVKLSCKASGYTFT. Cysteine 41 and cysteine 115 form a disulfide bridge. Residues 50 to 54 form a complementarity-determining-1 region; the sequence is SYWMH. Residues 55–68 are framework-2; it reads WVKQRPGRGLEWIG. The interval 69–85 is complementarity-determining-2; it reads RIDPNSGGTKYNEKFKS. The tract at residues 86–117 is framework-3; it reads KATLTVDTSSSTAYMQLHSLTSEDSAVYYCAR.

The protein is Ig heavy chain V region 186-1 of Mus musculus (Mouse).